A 173-amino-acid chain; its full sequence is UPF0316 protein Amet_0954 (173 aa).

3 helical membrane-spanning segments follow: residues 3-23 (LVLG…MGTV), 38-58 (AIGF…LEAL), and 61-81 (PVNI…GIYI).

Belongs to the UPF0316 family.

The protein resides in the cell membrane. This is UPF0316 protein Amet_0954 from Alkaliphilus metalliredigens (strain QYMF).